A 96-amino-acid polypeptide reads, in one-letter code: uncharacterized protein (96 aa).

A signal peptide spans 1 to 19 (MKQIIPALITLSFSPMAIA).

This is an uncharacterized protein from Synechocystis sp. (strain ATCC 27184 / PCC 6803 / Kazusa).